A 464-amino-acid polypeptide reads, in one-letter code: Argininosuccinate lyase (464 aa).

This sequence belongs to the lyase 1 family. Argininosuccinate lyase subfamily.

It is found in the cytoplasm. It catalyses the reaction 2-(N(omega)-L-arginino)succinate = fumarate + L-arginine. The protein operates within amino-acid biosynthesis; L-arginine biosynthesis; L-arginine from L-ornithine and carbamoyl phosphate: step 3/3. This Ectopseudomonas mendocina (strain ymp) (Pseudomonas mendocina) protein is Argininosuccinate lyase.